Here is a 241-residue protein sequence, read N- to C-terminus: Carboxy-S-adenosyl-L-methionine synthase 1 (241 aa).

S-adenosyl-L-methionine contacts are provided by residues Tyr37, 61-63 (GCS), Asn131, and Arg198.

Belongs to the class I-like SAM-binding methyltransferase superfamily. Cx-SAM synthase family. Homodimer.

It catalyses the reaction prephenate + S-adenosyl-L-methionine = carboxy-S-adenosyl-L-methionine + 3-phenylpyruvate + H2O. Its function is as follows. Catalyzes the conversion of S-adenosyl-L-methionine (SAM) to carboxy-S-adenosyl-L-methionine (Cx-SAM). This chain is Carboxy-S-adenosyl-L-methionine synthase 1, found in Yersinia pseudotuberculosis serotype IB (strain PB1/+).